A 137-amino-acid polypeptide reads, in one-letter code: Oleosin Ara h 11.0102 (137 aa).

Ala2 carries the post-translational modification N-acetylalanine; alternate. Helical transmembrane passes span 27–47 (AVVA…ATVI) and 55–75 (LFVI…LLGL).

Belongs to the oleosin family. In terms of tissue distribution, expressed in seeds (at protein level).

It localises to the lipid droplet. It is found in the membrane. In terms of biological role, may have a structural role to stabilize the lipid body during desiccation of the seed by preventing coalescence of the oil. Probably interacts with both lipid and phospholipid moieties of lipid bodies. May also provide recognition signals for specific lipase anchorage in lipolysis during seedling growth. The sequence is that of Oleosin Ara h 11.0102 from Arachis hypogaea (Peanut).